We begin with the raw amino-acid sequence, 289 residues long: Thioredoxin-like protein 1 (289 aa).

Residues 2 to 109 (VGVKPVGSDP…EEKIKQHLEN (108 aa)) enclose the Thioredoxin domain. Cys-34 and Cys-37 are joined by a disulfide. A Phosphoserine modification is found at Ser-113. The 171-residue stretch at 115–285 (EDADIPKGYM…NDFKRVVGKK (171 aa)) folds into the PITH domain.

Component of the 19S regulatory cap of the 26S proteasome. Interacts with PSMD14/RPN11. Interacts with, and reduces EEF1A1.

The protein resides in the cytoplasm. Its subcellular location is the nucleus. Active thioredoxin with a redox potential of about -250 mV. This is Thioredoxin-like protein 1 (Txnl1) from Mus musculus (Mouse).